The primary structure comprises 102 residues: Small ribosomal subunit protein uS10 (102 aa).

The protein belongs to the universal ribosomal protein uS10 family. Part of the 30S ribosomal subunit.

In terms of biological role, involved in the binding of tRNA to the ribosomes. This Chloroflexus aurantiacus (strain ATCC 29366 / DSM 635 / J-10-fl) protein is Small ribosomal subunit protein uS10.